The chain runs to 352 residues: D-arabitol-phosphate dehydrogenase (352 aa).

Positions 43, 65, 96, 99, 102, 110, and 151 each coordinate Mn(2+).

Belongs to the zinc-containing alcohol dehydrogenase family. As to quaternary structure, homotetramer. Mn(2+) is required as a cofactor.

The enzyme catalyses D-arabinitol 1-phosphate + NAD(+) = D-xylulose 5-phosphate + NADH + H(+). Its activity is regulated as follows. Inhibited by EDTA, 4-hydroxymercuribenzoic acid (PHMB), mercury and zinc ions at a concentration of 2 mM. Its function is as follows. Involved in the arabitol catabolism via the arabitol phosphate route. Catalyzes only the transformation of D-arabitol 1-phosphate (Arb1P) and D-arabitol 5-phosphate (Arb5P) into D-xylulose 5-phosphate (Xlu5P) and ribulose 5-phosphate, respectively. It can use both NAD and NADP. This is D-arabitol-phosphate dehydrogenase from Enterococcus avium (Streptococcus avium).